The sequence spans 222 residues: Probable transaldolase (222 aa).

The active-site Schiff-base intermediate with substrate is the Lys-91.

This sequence belongs to the transaldolase family. Type 3B subfamily.

The protein localises to the cytoplasm. It carries out the reaction D-sedoheptulose 7-phosphate + D-glyceraldehyde 3-phosphate = D-erythrose 4-phosphate + beta-D-fructose 6-phosphate. It participates in carbohydrate degradation; pentose phosphate pathway; D-glyceraldehyde 3-phosphate and beta-D-fructose 6-phosphate from D-ribose 5-phosphate and D-xylulose 5-phosphate (non-oxidative stage): step 2/3. Its function is as follows. Transaldolase is important for the balance of metabolites in the pentose-phosphate pathway. This is Probable transaldolase from Chlorobaculum tepidum (strain ATCC 49652 / DSM 12025 / NBRC 103806 / TLS) (Chlorobium tepidum).